A 220-amino-acid polypeptide reads, in one-letter code: Ribose-5-phosphate isomerase A (220 aa).

Substrate-binding positions include 29–32 (TGST), 82–85 (DGCD), and 95–98 (KGGG). Catalysis depends on glutamate 104, which acts as the Proton acceptor. Lysine 122 contributes to the substrate binding site.

The protein belongs to the ribose 5-phosphate isomerase family. Homodimer.

The enzyme catalyses aldehydo-D-ribose 5-phosphate = D-ribulose 5-phosphate. It functions in the pathway carbohydrate degradation; pentose phosphate pathway; D-ribose 5-phosphate from D-ribulose 5-phosphate (non-oxidative stage): step 1/1. Catalyzes the reversible conversion of ribose-5-phosphate to ribulose 5-phosphate. The sequence is that of Ribose-5-phosphate isomerase A from Laribacter hongkongensis (strain HLHK9).